Here is a 975-residue protein sequence, read N- to C-terminus: Glycine dehydrogenase (decarboxylating) (975 aa).

An N6-(pyridoxal phosphate)lysine modification is found at Lys-723.

It belongs to the GcvP family. In terms of assembly, the glycine cleavage system is composed of four proteins: P, T, L and H. Pyridoxal 5'-phosphate is required as a cofactor.

The enzyme catalyses N(6)-[(R)-lipoyl]-L-lysyl-[glycine-cleavage complex H protein] + glycine + H(+) = N(6)-[(R)-S(8)-aminomethyldihydrolipoyl]-L-lysyl-[glycine-cleavage complex H protein] + CO2. The glycine cleavage system catalyzes the degradation of glycine. The P protein binds the alpha-amino group of glycine through its pyridoxal phosphate cofactor; CO(2) is released and the remaining methylamine moiety is then transferred to the lipoamide cofactor of the H protein. The polypeptide is Glycine dehydrogenase (decarboxylating) (Burkholderia ambifaria (strain ATCC BAA-244 / DSM 16087 / CCUG 44356 / LMG 19182 / AMMD) (Burkholderia cepacia (strain AMMD))).